Consider the following 1364-residue polypeptide: Toxin subunit YenA2 (1364 aa).

A coiled-coil region spans residues Ser-1025 to Leu-1080.

In terms of assembly, semipurified toxin complex consists of at least YenA1-YenA2-YenB-YenC1-YenC2-Chi1-Chi2. The Yen-TC:K9 subcomplex is about 26 nm tall and 22 nm in diameter with 5-fold symmetry and 5 copies of YenA1, YenA2, Chi1 and Chi2; the chitinase subunits may be solvent accessible on the exterior the complex. The Yen-TC:K9 subcomplex has no insecticidal activity. The native complex with additional YenB, YenC1 and YenC2 subunits is 16 nm taller and is insecticidal; the toxicity-conferring subunits are present at about 1 copy each. Post-translationally, the isolated toxin complex includes 3 peptides starting between residues 768 and 778 of this protein, which might be physiologically relevant.

It is found in the secreted. Its function is as follows. Part of an orally active toxin complex (TC) with strong insecticidal effects on larvae of the Coleoptera Costelytra zealandica, Acrossidius tasmania and Adoryphorus couloni and some Lepidoptera larvae. The TC has an endochitinase activity. The chain is Toxin subunit YenA2 from Yersinia entomophaga.